We begin with the raw amino-acid sequence, 1929 residues long: Myoferlin (1929 aa).

A disordered region spans residues 1 to 53 (MISYEPPPSAISNPTDPGGTTIIQGDGENDEEEDRDIVDAGFNPSVPGAPGQT). Residues 27–36 (GENDEEEDRD) are compositionally biased toward acidic residues. C2 domains are found at residues 62–179 (VKGK…RKWV) and 218–354 (EDDD…EEYD). Ca(2+)-binding residues include Asp267, Asp275, Asp323, Asp325, and Asp331. The span at 898–907 (RRLVRKRKKD) shows a compositional bias: basic residues. Residues 898-918 (RRLVRKRKKDPKVSTTSKAAL) form a disordered region. 4 consecutive C2 domains span residues 996–1124 (GANT…LLWY), 1159–1283 (RAPQ…TKHE), 1408–1527 (IPYP…SHCG), and 1645–1793 (GPPG…EKCS). The Ca(2+) site is built by Asp1028, Asp1034, Asp1090, and Asp1092. Ca(2+) is bound by residues Asp1442, Asp1448, Asp1497, Asp1499, Asp1764, Ser1767, and Asp1770. Basic and acidic residues predominate over residues 1845-1858 (DAEERPAGKGRDEP). Positions 1845-1867 (DAEERPAGKGRDEPNMNPKLDPP) are disordered. A helical membrane pass occupies residues 1894–1914 (WVFIGLIILLLVLLFLGVFFY).

The protein belongs to the ferlin family. Ca(2+) is required as a cofactor.

The protein resides in the cell membrane. Its subcellular location is the nucleus membrane. The protein localises to the cytoplasmic vesicle membrane. May play a role in membrane regeneration and repair. This Xenopus tropicalis (Western clawed frog) protein is Myoferlin (myof).